The primary structure comprises 124 residues: Small ribosomal subunit protein uS13 (124 aa).

The disordered stretch occupies residues 94 to 124 (GLPLRGQRTKNNSRTRKGRRKTVANKKKATK). Positions 100-124 (QRTKNNSRTRKGRRKTVANKKKATK) are enriched in basic residues.

It belongs to the universal ribosomal protein uS13 family. Part of the 30S ribosomal subunit. Forms a loose heterodimer with protein S19. Forms two bridges to the 50S subunit in the 70S ribosome.

Its function is as follows. Located at the top of the head of the 30S subunit, it contacts several helices of the 16S rRNA. In the 70S ribosome it contacts the 23S rRNA (bridge B1a) and protein L5 of the 50S subunit (bridge B1b), connecting the 2 subunits; these bridges are implicated in subunit movement. Contacts the tRNAs in the A and P-sites. This is Small ribosomal subunit protein uS13 from Christiangramia forsetii (strain DSM 17595 / CGMCC 1.15422 / KT0803) (Gramella forsetii).